Here is an 87-residue protein sequence, read N- to C-terminus: MKQGIHPDYREVVFQDMSNGFKFITRSTIQTRETIEFEGKTYPLAKIEVSSESHSFYTGQQKIMDTAGRVEKFKNKFGARASGKAAK.

Belongs to the bacterial ribosomal protein bL31 family. Type B subfamily. As to quaternary structure, part of the 50S ribosomal subunit.

This Burkholderia pseudomallei (strain 1106a) protein is Large ribosomal subunit protein bL31B.